Reading from the N-terminus, the 273-residue chain is Putative phosphoenolpyruvate synthase regulatory protein (273 aa).

153–160 lines the ADP pocket; sequence AVSRAGKT.

This sequence belongs to the pyruvate, phosphate/water dikinase regulatory protein family. PSRP subfamily.

The catalysed reaction is [pyruvate, water dikinase] + ADP = [pyruvate, water dikinase]-phosphate + AMP + H(+). The enzyme catalyses [pyruvate, water dikinase]-phosphate + phosphate + H(+) = [pyruvate, water dikinase] + diphosphate. Bifunctional serine/threonine kinase and phosphorylase involved in the regulation of the phosphoenolpyruvate synthase (PEPS) by catalyzing its phosphorylation/dephosphorylation. This Stenotrophomonas maltophilia (strain R551-3) protein is Putative phosphoenolpyruvate synthase regulatory protein.